A 269-amino-acid polypeptide reads, in one-letter code: Triosephosphate isomerase (269 aa).

8–10 is a substrate binding site; sequence NWK. Residue H105 is the Electrophile of the active site. E183 serves as the catalytic Proton acceptor. Substrate-binding positions include G189, S227, and 248–249; that span reads GG.

It belongs to the triosephosphate isomerase family. Homodimer.

The protein resides in the cytoplasm. It catalyses the reaction D-glyceraldehyde 3-phosphate = dihydroxyacetone phosphate. Its pathway is carbohydrate biosynthesis; gluconeogenesis. The protein operates within carbohydrate degradation; glycolysis; D-glyceraldehyde 3-phosphate from glycerone phosphate: step 1/1. Functionally, involved in the gluconeogenesis. Catalyzes stereospecifically the conversion of dihydroxyacetone phosphate (DHAP) to D-glyceraldehyde-3-phosphate (G3P). This is Triosephosphate isomerase from Psychrobacter cryohalolentis (strain ATCC BAA-1226 / DSM 17306 / VKM B-2378 / K5).